The primary structure comprises 352 residues: Beta-methylmalyl-CoA dehydratase (352 aa).

A MaoC-like domain is found at 16 to 129 (LGQTIVHATP…GKTGVVYVHS (114 aa)). Substrate-binding positions include 62–65 (PIDS), 85–88 (IANL), and 96–98 (GAV).

As to quaternary structure, homodimer.

It catalyses the reaction (2R,3S)-beta-methylmalyl-CoA = 2-methylfumaryl-CoA + H2O. Its function is as follows. Involved in the glyoxylate assimilation cycle used to regenerate acetyl-CoA and produce pyruvate as universal precursor for biosynthesis. Catalyzes the reversible dehydration of beta-methylmalyl-CoA ((2R,3S)-beta-methylmalyl-CoA) to yield mesaconyl-CoA (2-methylfumaryl-CoA). In Chloroflexus aurantiacus (strain ATCC 29366 / DSM 635 / J-10-fl), this protein is Beta-methylmalyl-CoA dehydratase (mch).